A 448-amino-acid chain; its full sequence is Asparagine--tRNA ligase (448 aa).

Belongs to the class-II aminoacyl-tRNA synthetase family. Homodimer.

The protein resides in the cytoplasm. The catalysed reaction is tRNA(Asn) + L-asparagine + ATP = L-asparaginyl-tRNA(Asn) + AMP + diphosphate + H(+). The chain is Asparagine--tRNA ligase from Streptococcus mutans serotype c (strain ATCC 700610 / UA159).